The primary structure comprises 559 residues: DNA ligase (559 aa).

An ATP-binding site is contributed by Glu-247. Residue Lys-249 is the N6-AMP-lysine intermediate of the active site. ATP-binding residues include Arg-254, Arg-269, Glu-299, Phe-339, Arg-414, and Lys-420.

The protein belongs to the ATP-dependent DNA ligase family. It depends on Mg(2+) as a cofactor.

The enzyme catalyses ATP + (deoxyribonucleotide)n-3'-hydroxyl + 5'-phospho-(deoxyribonucleotide)m = (deoxyribonucleotide)n+m + AMP + diphosphate.. DNA ligase that seals nicks in double-stranded DNA during DNA replication, DNA recombination and DNA repair. The sequence is that of DNA ligase from Pyrococcus abyssi.